Here is a 245-residue protein sequence, read N- to C-terminus: 6-carboxyhexanoate--CoA ligase (245 aa).

This sequence belongs to the BioW family. In terms of assembly, homodimer. Mg(2+) is required as a cofactor.

The catalysed reaction is heptanedioate + ATP + CoA = 6-carboxyhexanoyl-CoA + AMP + diphosphate. It functions in the pathway metabolic intermediate metabolism; pimeloyl-CoA biosynthesis; pimeloyl-CoA from pimelate: step 1/1. Functionally, catalyzes the transformation of pimelate into pimeloyl-CoA with concomitant hydrolysis of ATP to AMP. This is 6-carboxyhexanoate--CoA ligase from Sulfurihydrogenibium azorense (strain DSM 15241 / OCM 825 / Az-Fu1).